The primary structure comprises 399 residues: MAREKFERNKPHVNIGTIGHVDHGKTTLTAAITNVLAKKGQAQAQDYGDIDGAPEERERGITINTAHVEYETAERHYAHVDCPGHADYVKNMITGAAQMDGAILVCAATDGPMAQTKEHILLAKQVGVPALVVALNKCDMVDDEEIIELVEMEIRELLDSYDFPGDDIPIVQVSGLKALEGDSTWESKIEELMTAVDASIPEPEREIDKPFLMAVEDVFSITGRGTVATGRIERGKVKVGEEVEIVGIRDTRLTTVTGVEMFRKLLDEGMAGDNVGLLLRGVQKEDIERGMVLVKKGSITPHTKFEGEVYVLKKEEGGRHTPFFAGYRPQFYIRTTDVTGQITAFTADDGANVEMVMPGDRIKMTGELICPVAIEQGMRFAIREGGRTIGAGVVSKIIE.

A tr-type G domain is found at 10-204 (KPHVNIGTIG…AVDASIPEPE (195 aa)). The G1 stretch occupies residues 19 to 26 (GHVDHGKT). 19–26 (GHVDHGKT) is a binding site for GTP. A Mg(2+)-binding site is contributed by T26. The tract at residues 60–64 (GITIN) is G2. The tract at residues 81-84 (DCPG) is G3. Residues 81-85 (DCPGH) and 136-139 (NKCD) contribute to the GTP site. A G4 region spans residues 136 to 139 (NKCD). The segment at 174-176 (SGL) is G5.

Belongs to the TRAFAC class translation factor GTPase superfamily. Classic translation factor GTPase family. EF-Tu/EF-1A subfamily. As to quaternary structure, monomer.

It is found in the cytoplasm. It catalyses the reaction GTP + H2O = GDP + phosphate + H(+). GTP hydrolase that promotes the GTP-dependent binding of aminoacyl-tRNA to the A-site of ribosomes during protein biosynthesis. This chain is Elongation factor Tu, found in Prochlorococcus marinus subsp. pastoris (strain CCMP1986 / NIES-2087 / MED4).